The chain runs to 493 residues: Glutamyl-tRNA(Gln) amidotransferase subunit A (493 aa).

Residues K81 and S156 each act as charge relay system in the active site. The Acyl-ester intermediate role is filled by S180.

This sequence belongs to the amidase family. GatA subfamily. As to quaternary structure, heterotrimer of A, B and C subunits.

The catalysed reaction is L-glutamyl-tRNA(Gln) + L-glutamine + ATP + H2O = L-glutaminyl-tRNA(Gln) + L-glutamate + ADP + phosphate + H(+). In terms of biological role, allows the formation of correctly charged Gln-tRNA(Gln) through the transamidation of misacylated Glu-tRNA(Gln) in organisms which lack glutaminyl-tRNA synthetase. The reaction takes place in the presence of glutamine and ATP through an activated gamma-phospho-Glu-tRNA(Gln). The protein is Glutamyl-tRNA(Gln) amidotransferase subunit A of Mycolicibacterium paratuberculosis (strain ATCC BAA-968 / K-10) (Mycobacterium paratuberculosis).